We begin with the raw amino-acid sequence, 415 residues long: MDPLSVLKEFTIRGDIDKIERVGANYRFGSEYSFPCATETAYRSKSGSLYTLEALVHYVKNQQLKHGEYMQSTVKNSVPAVTLPDRKPLLDYLTGRVASSDSIDFLLLQQQNAQSQKQNEEYRPDQDNSAFVSRENAIADMEVEDFGKSGEDVDYIMLIRSNERPLKSRDAILQCKNRDFYSVLVNSTKREEERQRIESHQRKDGLVAKSRLMGAEERGIVGFSSGGGDDNGYDANPKSKLHFKAGKIGEGVPIILVPSAFQTLITIYNVKEFLEDGVYIPNDVKAKEMKGLKPDCITVQKKFSRDRERVVTAYEVRDKPSALKPDDWDRVVAVFVLGKDWQFKDWPFKDHVEIFNKIIGFFLRFEDDSIESAKTVKQWNVKIISISKNKRHQDRAAALEVWEKLEEFVRSRSHS.

This sequence belongs to the CDC73 family. In terms of assembly, component of the nuclear PAF1 complex (PAF1C), which consists of VIP2/ELF7/PAF1, VIP3/SKI8/WDR61, VIP4/LEO1, VIP5/RTF1, VIP6/ELF8/CTR9 and CDC73. As to expression, expressed in root tips, shoot apex, young leaves and flowers, especially in stamen filaments and carpels.

It localises to the nucleus. Its function is as follows. Component of the PAF1 complex (PAF1C) which is involved in histone modifications such as methylation on histone H3 'Lys-4' (H3K4me3). Involved in regulation of flowering time. Required for the expression of the flowering repressors FLC and MADS-box genes of the MAF family. Required for histone H3 trimethylation on 'Lys-4' (H3K4me3) at the FLC locus. Prevents trimethylation on 'Lys-27' (H3K27me3) at the same locus. This chain is Protein CDC73 homolog, found in Arabidopsis thaliana (Mouse-ear cress).